The following is a 642-amino-acid chain: Chaperone protein DnaK (642 aa).

T199 is subject to Phosphothreonine; by autocatalysis. Residues 570 to 585 are compositionally biased toward basic and acidic residues; sequence EELEQASKDGDKEAID. Residues 570–642 are disordered; that stretch reads EELEQASKDG…FEEVKDDDKK (73 aa). Residues 600 to 620 show a composition bias toward low complexity; it reads EAAQQQQAQQGAEGAAGGEQQ. The segment covering 627–642 has biased composition (acidic residues); that stretch reads DVVDAEFEEVKDDDKK.

It belongs to the heat shock protein 70 family.

Its function is as follows. Acts as a chaperone. This is Chaperone protein DnaK from Idiomarina loihiensis (strain ATCC BAA-735 / DSM 15497 / L2-TR).